A 218-amino-acid polypeptide reads, in one-letter code: Probable GTP-binding protein EngB (218 aa).

Positions 31-205 (VGVEIAFAGR…LGILNEWCHP (175 aa)) constitute an EngB-type G domain. Residues 39–46 (GRSNAGKS), 66–70 (GRTQL), 84–87 (DLPG), 151–154 (TKCD), and 184–186 (FSS) contribute to the GTP site. Mg(2+) is bound by residues S46 and T68.

The protein belongs to the TRAFAC class TrmE-Era-EngA-EngB-Septin-like GTPase superfamily. EngB GTPase family. Mg(2+) serves as cofactor.

Necessary for normal cell division and for the maintenance of normal septation. This Shewanella loihica (strain ATCC BAA-1088 / PV-4) protein is Probable GTP-binding protein EngB.